Reading from the N-terminus, the 238-residue chain is tRNA (guanine-N(7)-)-methyltransferase (238 aa).

Positions 68, 93, 120, and 143 each coordinate S-adenosyl-L-methionine. D143 is a catalytic residue. Residues K147, D179, and 216–219 contribute to the substrate site; that span reads TKFE.

This sequence belongs to the class I-like SAM-binding methyltransferase superfamily. TrmB family.

It carries out the reaction guanosine(46) in tRNA + S-adenosyl-L-methionine = N(7)-methylguanosine(46) in tRNA + S-adenosyl-L-homocysteine. Its pathway is tRNA modification; N(7)-methylguanine-tRNA biosynthesis. In terms of biological role, catalyzes the formation of N(7)-methylguanine at position 46 (m7G46) in tRNA. This Marinobacter nauticus (strain ATCC 700491 / DSM 11845 / VT8) (Marinobacter aquaeolei) protein is tRNA (guanine-N(7)-)-methyltransferase.